Here is a 478-residue protein sequence, read N- to C-terminus: 7-dehydrocholesterol reductase (478 aa).

Residues 1–28 are disordered; that stretch reads MMASDRVRKRHKGSANGAQTVEKEPSKE. 6 helical membrane-spanning segments follow: residues 43-63, 97-117, 180-200, 269-289, 309-329, and 333-353; these read LSGVILLLCFAPFLVSFFIMA, WAAAKIYAIWVTFQVVLYMCV, WIPLLWCTNILGYAVSTFAFI, VTNSMILVNVLQAVYVVDFFW, LGWGDCVWLPFLYTLQGLYLV, and IQLSTPHAAGVLILGLVGYYI. NADP(+) contacts are provided by residues K361, R365, M398, W403, and 410-411; that span reads NY. Residues 424–444 form a helical membrane-spanning segment; the sequence is ACGGNHLLPYFYIIYMTILLV. NADP(+) contacts are provided by residues D450, 454–458, and Y465; that span reads CSNKY.

The protein belongs to the ERG4/ERG24 family.

Its subcellular location is the endoplasmic reticulum membrane. It catalyses the reaction cholesterol + NADP(+) = 7-dehydrocholesterol + NADPH + H(+). It carries out the reaction 7-dehydrodesmosterol + NADPH + H(+) = desmosterol + NADP(+). Its pathway is steroid biosynthesis; cholesterol biosynthesis. Functionally, catalyzes the last step of the cholesterol synthesis pathway, which transforms cholesta-5,7-dien-3beta-ol (7-dehydrocholesterol,7-DHC) into cholesterol by reducing the C7-C8 double bond of its sterol core. Can also metabolize cholesta-5,7,24-trien-3beta-ol (7-dehydrodemosterol, 7-DHD) to desmosterol, which is then metabolized by the Delta(24)-sterol reductase (DHCR24) to cholesterol. Modulates ferroptosis (a form of regulated cell death driven by iron-dependent lipid peroxidation) through the metabolic breakdown of the anti-ferroptotic metabolites 7-DHC and 7-DHD which, when accumulated, divert the propagation of peroxyl radical-mediated damage from phospholipid components to its sterol core, protecting plasma and mitochondrial membranes from phospholipid autoxidation. This is 7-dehydrocholesterol reductase (dhcr7) from Danio rerio (Zebrafish).